A 263-amino-acid chain; its full sequence is Ribosomal RNA small subunit methyltransferase A (263 aa).

Positions 20, 22, 47, 68, 90, and 110 each coordinate S-adenosyl-L-methionine.

Belongs to the class I-like SAM-binding methyltransferase superfamily. rRNA adenine N(6)-methyltransferase family. RsmA subfamily.

The protein localises to the cytoplasm. It carries out the reaction adenosine(1518)/adenosine(1519) in 16S rRNA + 4 S-adenosyl-L-methionine = N(6)-dimethyladenosine(1518)/N(6)-dimethyladenosine(1519) in 16S rRNA + 4 S-adenosyl-L-homocysteine + 4 H(+). In terms of biological role, specifically dimethylates two adjacent adenosines (A1518 and A1519) in the loop of a conserved hairpin near the 3'-end of 16S rRNA in the 30S particle. May play a critical role in biogenesis of 30S subunits. In Chlorobium limicola (strain DSM 245 / NBRC 103803 / 6330), this protein is Ribosomal RNA small subunit methyltransferase A.